The following is a 384-amino-acid chain: Endoglucanase (384 aa).

An N-terminal signal peptide occupies residues 1-25 (MTRRRLLHAGTLAGVAALLPAAALA). Glu63 acts as the Proton donor in catalysis. The active-site Nucleophile is the Asp124.

Belongs to the glycosyl hydrolase 8 (cellulase D) family.

It localises to the secreted. The catalysed reaction is Endohydrolysis of (1-&gt;4)-beta-D-glucosidic linkages in cellulose, lichenin and cereal beta-D-glucans.. It participates in glycan metabolism; bacterial cellulose biosynthesis. Its function is as follows. Hydrolyzes carboxymethylcellulose. In Xanthomonas axonopodis pv. citri (strain 306), this protein is Endoglucanase (bcsZ).